We begin with the raw amino-acid sequence, 414 residues long: Gamma-glutamyl phosphate reductase (414 aa).

Belongs to the gamma-glutamyl phosphate reductase family.

The protein localises to the cytoplasm. It carries out the reaction L-glutamate 5-semialdehyde + phosphate + NADP(+) = L-glutamyl 5-phosphate + NADPH + H(+). It functions in the pathway amino-acid biosynthesis; L-proline biosynthesis; L-glutamate 5-semialdehyde from L-glutamate: step 2/2. Its function is as follows. Catalyzes the NADPH-dependent reduction of L-glutamate 5-phosphate into L-glutamate 5-semialdehyde and phosphate. The product spontaneously undergoes cyclization to form 1-pyrroline-5-carboxylate. This is Gamma-glutamyl phosphate reductase from Xanthomonas campestris pv. campestris (strain 8004).